We begin with the raw amino-acid sequence, 153 residues long: Fucose mutarotase (153 aa).

The active-site Proton donor is the H24. D32 serves as a coordination point for substrate. D69 is a catalytic residue. Residues M79, Y119, Y137, and N139 each contribute to the substrate site. Residue Y119 is part of the active site.

Belongs to the RbsD / FucU family. In terms of assembly, mainly homodimer, but also exists as homotetramer, homooctamer, and homodecamer. The homodimeric form seems catalytically inactive.

It catalyses the reaction alpha-L-fucose = beta-L-fucose. The protein operates within carbohydrate metabolism; L-fucose metabolism. In terms of biological role, involved in the interconversion between alpha- and beta-L-fucoses. L-Fucose (6-deoxy-L-galactose) exists as alpha-L-fucose (29.5%) and beta-L-fucose (70.5%), the beta-form is metabolized through the salvage pathway. GDP-L-fucose formed either by the de novo or salvage pathways is transported into the endoplasmic reticulum, where it serves as a substrate for N- and O-glycosylations by fucosyltransferases. Fucosylated structures expressed on cell surfaces or secreted in biological fluids are believed to play a critical role in cell-cell adhesion and recognition processes. In Bos taurus (Bovine), this protein is Fucose mutarotase (FUOM).